Here is a 163-residue protein sequence, read N- to C-terminus: Single-stranded DNA-binding protein 2 (163 aa).

The 104-residue stretch at 1–104 (MINNVVLVGR…VVADNFQMLE (104 aa)) folds into the SSB domain. A disordered region spans residues 109–163 (REGGSTGSFNGGFNNNTSSSNSYSAPAQQTPNFGRDDSPFGNSNPMDISDDDLPF). The segment covering 119-130 (GGFNNNTSSSNS) has biased composition (low complexity). The span at 131-140 (YSAPAQQTPN) shows a compositional bias: polar residues. The short motif at 158–163 (DDDLPF) is the Important for interaction with partner proteins element.

In terms of assembly, homotetramer.

Its function is as follows. Plays an important role in DNA replication, recombination and repair. Binds to ssDNA and to an array of partner proteins to recruit them to their sites of action during DNA metabolism. This chain is Single-stranded DNA-binding protein 2 (ssb2), found in Streptococcus pyogenes serotype M6 (strain ATCC BAA-946 / MGAS10394).